The chain runs to 651 residues: PTS system sucrose-specific EIIBCA component (651 aa).

In terms of domain architecture, PTS EIIB type-1 spans H3 to T86. C25 functions as the Phosphocysteine intermediate; for EIIB activity in the catalytic mechanism. Helical transmembrane passes span V109–A129, M158–A178, F182–V202, G204–L224, V226–A246, F264–V284, T303–L323, F345–F365, F404–L424, and I444–I464. One can recognise a PTS EIIC type-1 domain in the interval L121–A481. The PTS EIIA type-1 domain maps to D510–N614. Catalysis depends on H562, which acts as the Tele-phosphohistidine intermediate; for EIIA activity.

Its subcellular location is the cell membrane. It catalyses the reaction N(pros)-phospho-L-histidyl-[protein](out) + sucrose = sucrose 6(G)-phosphate(in) + L-histidyl-[protein]. Functionally, the phosphoenolpyruvate-dependent sugar phosphotransferase system (sugar PTS), a major carbohydrate active transport system, catalyzes the phosphorylation of incoming sugar substrates concomitantly with their translocation across the cell membrane. This system is involved in sucrose transport. The chain is PTS system sucrose-specific EIIBCA component (scrA) from Pediococcus pentosaceus.